Here is a 115-residue protein sequence, read N- to C-terminus: Cell division topological specificity factor (115 aa).

The interval 89-115 is disordered; the sequence is TGQIQLKEPKNQSEVDSPETEGKDQNS.

It belongs to the MinE family.

In terms of biological role, prevents the cell division inhibition by proteins MinC and MinD at internal division sites while permitting inhibition at polar sites. This ensures cell division at the proper site by restricting the formation of a division septum at the midpoint of the long axis of the cell. This is Cell division topological specificity factor from Prochlorococcus marinus (strain NATL2A).